The sequence spans 728 residues: MSNETKCPFNHTAGSGTTNKDWWPNQLNLNVLHRHSALSDPMDPDFDYAEAFKKLDLAAVKQDLHALMTTSQDWWPADFGHYGGLFVRMAWHSAGTYRTADGRGGAGGGQQRFAPLNSWPDNVSLDKARRLLWPIKQKYGRNISWADLLILTGNVALESMGFKTFGYAGGRVDTWEPDDVYWGSEKIWLELSGGPNSRYTGKRELESPLAAVQMGLIYVNPEGPDGNPDPVAAAHDIRETFARMAMNDEETVALIAGGHTFGKTHGAGPASNVGPEPEAAGLEEQGLGWKSTFGTGKGKDTITSGLEVTWTSTPTKWSNDFFKHLFSYEWELTKSPAGAHQWVAKDADEVIPDAYDASKKHRPTMLTTDLSLRFDPAYEKISRRFYENPAEFADAFARAWFKLTHRDMGPRSRYLGPEVPAEHLLWQDPIPAVDHPLIDDADVAALKAKVLATGLSVSQLVSTAWASAATFRGSDKRGGANGARIRLAPQKDWEVNQPAALAAVLEALEGVQKAFNDAQTGGKKVSLADLIVLAGAAGVEQAAKNAGIAITVPFAPGRMDASQEETDVDAMAVLEPLADGFRNYLKHPYKTPAEALLVDKAQLLTLTAPEMTVLVGGLRVLGANVGDSKHGVFTDRPGTLSNDFFANLLDMRTEWKPVSAANDVFEGRDRATGAVKWTGTRVDLIFGSHSQLRALAEVYGSADAQEKFVRDFVAAWNKVMNLDRFDLA.

Positions 91 to 218 (WHSAGTYRTA…LAAVQMGLIY (128 aa)) form a cross-link, tryptophyl-tyrosyl-methioninium (Trp-Tyr) (with M-244). Residue His-92 is the Proton acceptor of the active site. The tryptophyl-tyrosyl-methioninium (Tyr-Met) (with W-91) cross-link spans 218-244 (YVNPEGPDGNPDPVAAAHDIRETFARM). His-259 contacts heme b.

It belongs to the peroxidase family. Peroxidase/catalase subfamily. In terms of assembly, homodimer or homotetramer. The cofactor is heme b. In terms of processing, formation of the three residue Trp-Tyr-Met cross-link is important for the catalase, but not the peroxidase activity of the enzyme.

The enzyme catalyses H2O2 + AH2 = A + 2 H2O. It carries out the reaction 2 H2O2 = O2 + 2 H2O. In terms of biological role, bifunctional enzyme with both catalase and broad-spectrum peroxidase activity. The chain is Catalase-peroxidase 1 from Burkholderia cenocepacia (strain ATCC BAA-245 / DSM 16553 / LMG 16656 / NCTC 13227 / J2315 / CF5610) (Burkholderia cepacia (strain J2315)).